Consider the following 116-residue polypeptide: Large ribosomal subunit protein bL19 (116 aa).

It belongs to the bacterial ribosomal protein bL19 family.

In terms of biological role, this protein is located at the 30S-50S ribosomal subunit interface and may play a role in the structure and function of the aminoacyl-tRNA binding site. The chain is Large ribosomal subunit protein bL19 from Streptomyces avermitilis (strain ATCC 31267 / DSM 46492 / JCM 5070 / NBRC 14893 / NCIMB 12804 / NRRL 8165 / MA-4680).